The primary structure comprises 315 residues: NAD-dependent protein lipoamidase sirtuin-4, mitochondrial (315 aa).

The N-terminal 29 residues, 1-29 (MRMSFGLTFKRTAKVHWRANFSQQCSLRS), are a transit peptide targeting the mitochondrion. The region spanning 38 to 315 (PPLDPEKVKE…GELLPLIDPR (278 aa)) is the Deacetylase sirtuin-type domain. NAD(+)-binding positions include 63 to 83 (GAGISTESGIPDYRSEKVGLY) and 144 to 147 (QNVD). The active-site Proton acceptor is His-162. Residues Cys-170, Cys-173, Cys-221, and Cys-224 each coordinate Zn(2+). Residues 261–263 (GSS), 287–289 (NIG), and Cys-305 each bind NAD(+).

Belongs to the sirtuin family. Class II subfamily. Interacts with GLUD1, IDE and SLC25A5. Interacts with DLAT and PDHX. Interacts with MCCC1 (via the biotin carboxylation domain). Interacts with PCCA and PC. The cofactor is Zn(2+).

It localises to the mitochondrion matrix. The catalysed reaction is N(6)-[(R)-lipoyl]-L-lysyl-[protein] + NAD(+) + H2O = 2''-O-lipoyl-ADP-D-ribose + nicotinamide + L-lysyl-[protein]. It carries out the reaction N(6)-biotinyl-L-lysyl-[protein] + NAD(+) + H2O = 2''-O-biotinyl-ADP-D-ribose + nicotinamide + L-lysyl-[protein]. It catalyses the reaction N(6)-acetyl-L-lysyl-[protein] + NAD(+) + H2O = 2''-O-acetyl-ADP-D-ribose + nicotinamide + L-lysyl-[protein]. The enzyme catalyses L-cysteinyl-[protein] + NAD(+) = S-(ADP-D-ribosyl)-L-cysteinyl-[protein] + nicotinamide + H(+). Its function is as follows. Acts as a NAD-dependent protein lipoamidase, biotinylase, deacetylase and ADP-ribosyl transferase. Catalyzes more efficiently removal of lipoyl- and biotinyl- than acetyl-lysine modifications. Inhibits the pyruvate dehydrogenase complex (PDH) activity via the enzymatic hydrolysis of the lipoamide cofactor from the E2 component, DLAT, in a phosphorylation-independent manner. Catalyzes the transfer of ADP-ribosyl groups onto target proteins, including mitochondrial GLUD1, inhibiting GLUD1 enzyme activity. Acts as a negative regulator of mitochondrial glutamine metabolism by mediating mono ADP-ribosylation of GLUD1: expressed in response to DNA damage and negatively regulates anaplerosis by inhibiting GLUD1, leading to block metabolism of glutamine into tricarboxylic acid cycle and promoting cell cycle arrest. In response to mTORC1 signal, SIRT4 expression is repressed, promoting anaplerosis and cell proliferation. Acts as a tumor suppressor. Also acts as a NAD-dependent protein deacetylase: mediates deacetylation of 'Lys-471' of MLYCD, inhibiting its activity, thereby acting as a regulator of lipid homeostasis. Does not seem to deacetylate PC. Controls fatty acid oxidation by inhibiting PPARA transcriptional activation. Impairs SIRT1-PPARA interaction probably through the regulation of NAD(+) levels. Down-regulates insulin secretion. The sequence is that of NAD-dependent protein lipoamidase sirtuin-4, mitochondrial from Bos taurus (Bovine).